The following is a 326-amino-acid chain: Putative UPF0725 protein At1g28500 (326 aa).

Over residues 301–320 (KDTEQRSKTRQSEEKVESSQ) the composition is skewed to basic and acidic residues. The interval 301 to 326 (KDTEQRSKTRQSEEKVESSQKRSRLC) is disordered.

It belongs to the UPF0725 (EMB2204) family.

The sequence is that of Putative UPF0725 protein At1g28500 from Arabidopsis thaliana (Mouse-ear cress).